Here is a 738-residue protein sequence, read N- to C-terminus: Platelet endothelial cell adhesion molecule (738 aa).

Positions 1–27 (MQPRWAQGATMWLGVLLTLLLCSSLEG) are cleaved as a signal peptide. The Extracellular portion of the chain corresponds to 28–601 (QENSFTINSV…VRVILAPWKK (574 aa)). 3 Ig-like C2-type domains span residues 35 to 121 (NSVD…KTTA), 145 to 233 (GGIV…TESF), and 236 to 315 (PKFH…SKVS). N-linked (GlcNAc...) asparagine glycosylation is found at Asn-52, Asn-84, and Asn-151. The cysteines at positions 57 and 109 are disulfide-linked. Disulfide bonds link Cys-152-Cys-206 and Cys-256-Cys-304. Residues Asn-301, Asn-320, Asn-344, Asn-356, Asn-453, and Asn-551 are each glycosylated (N-linked (GlcNAc...) asparagine). Ig-like C2-type domains follow at residues 328 to 401 (PELE…NTVQ), 424 to 493 (GQTI…EVLR), and 499 to 591 (PVDE…KILT). Intrachain disulfides connect Cys-347–Cys-386, Cys-431–Cys-476, and Cys-523–Cys-572. Residues 602–620 (GLIAVVIIGVIIALLIIAA) form a helical membrane-spanning segment. Residues 621–738 (KCYFLRKAKA…SRTEGSLDGT (118 aa)) are Cytoplasmic-facing. Residue Cys-622 is the site of S-palmitoyl cysteine attachment. Positions 658-715 (EANSHYGHNDDVRNHAMKPINDNKEPLNSDVQYTEVQVSSAESHKDLGKKDTETVYSE) are disordered. Polar residues predominate over residues 686–698 (SDVQYTEVQVSSA). 2 short sequence motifs (ITIM motif) span residues 688–693 (VQYTEV) and 711–716 (TVYSEV). 2 positions are modified to phosphotyrosine; by FER: Tyr-690 and Tyr-713. Residues 699–715 (ESHKDLGKKDTETVYSE) are compositionally biased toward basic and acidic residues. The segment at 709–729 (TETVYSEVRKAVPDAVESRYS) is membrane-bound segment which detaches upon phosphorylation. The interval 721–738 (PDAVESRYSRTEGSLDGT) is may play a role in cytoprotective signaling. Residues Ser-729 and Ser-734 each carry the phosphoserine modification.

In terms of assembly, trans-homodimer (via Ig-like C2-type 1 and Ig-like C2-type 2 domains); trans-homodimerization is required for cell-cell interaction. Forms a complex with BDKRB2 and GNAQ. Interacts with BDKRB2 and GNAQ. Interacts with PTPN11; Tyr-713 is critical for PTPN11 recruitment. Interacts with FER. Interacts (via Ig-like C2-type domain 6) with CD177; the interaction is Ca(2+)-dependent; the interaction is direct. Post-translationally, phosphorylated on Ser and Tyr residues after cellular activation by src kinases. Upon activation, phosphorylated on Ser-729 which probably initiates the dissociation of the membrane-interaction segment (residues 709-729) from the cell membrane allowing the sequential phosphorylation of Tyr-713 and Tyr-690. Constitutively phosphorylated on Ser-734 in resting platelets. Phosphorylated on tyrosine residues by FER and FES in response to FCER1 activation. In endothelial cells Fyn mediates mechanical-force (stretch or pull) induced tyrosine phosphorylation. Palmitoylation by ZDHHC21 is necessary for cell surface expression in endothelial cells and enrichment in membrane rafts. As to expression, expressed on platelets and leukocytes and is primarily concentrated at the borders between endothelial cells. Expressed in human umbilical vein endothelial cells (HUVECs) (at protein level). Expressed on neutrophils (at protein level). Isoform Long predominates in all tissues examined. Isoform Delta12 is detected only in trachea. Isoform Delta14-15 is only detected in lung. Isoform Delta14 is detected in all tissues examined with the strongest expression in heart. Isoform Delta15 is expressed in brain, testis, ovary, cell surface of platelets, human umbilical vein endothelial cells (HUVECs), Jurkat T-cell leukemia, human erythroleukemia (HEL) and U-937 histiocytic lymphoma cell lines (at protein level).

The protein localises to the cell membrane. The protein resides in the membrane raft. It is found in the cell junction. In terms of biological role, cell adhesion molecule which is required for leukocyte transendothelial migration (TEM) under most inflammatory conditions. Tyr-690 plays a critical role in TEM and is required for efficient trafficking of PECAM1 to and from the lateral border recycling compartment (LBRC) and is also essential for the LBRC membrane to be targeted around migrating leukocytes. Trans-homophilic interaction may play a role in endothelial cell-cell adhesion via cell junctions. Heterophilic interaction with CD177 plays a role in transendothelial migration of neutrophils. Homophilic ligation of PECAM1 prevents macrophage-mediated phagocytosis of neighboring viable leukocytes by transmitting a detachment signal. Promotes macrophage-mediated phagocytosis of apoptotic leukocytes by tethering them to the phagocytic cells; PECAM1-mediated detachment signal appears to be disabled in apoptotic leukocytes. Modulates bradykinin receptor BDKRB2 activation. Regulates bradykinin- and hyperosmotic shock-induced ERK1/2 activation in endothelial cells. Induces susceptibility to atherosclerosis. Does not protect against apoptosis. This is Platelet endothelial cell adhesion molecule (PECAM1) from Homo sapiens (Human).